The primary structure comprises 281 residues: Ribosomal RNA small subunit methyltransferase A (281 aa).

Positions 25, 27, 52, 73, 99, and 118 each coordinate S-adenosyl-L-methionine.

It belongs to the class I-like SAM-binding methyltransferase superfamily. rRNA adenine N(6)-methyltransferase family. RsmA subfamily.

The protein resides in the cytoplasm. The catalysed reaction is adenosine(1518)/adenosine(1519) in 16S rRNA + 4 S-adenosyl-L-methionine = N(6)-dimethyladenosine(1518)/N(6)-dimethyladenosine(1519) in 16S rRNA + 4 S-adenosyl-L-homocysteine + 4 H(+). Functionally, specifically dimethylates two adjacent adenosines (A1518 and A1519) in the loop of a conserved hairpin near the 3'-end of 16S rRNA in the 30S particle. May play a critical role in biogenesis of 30S subunits. The sequence is that of Ribosomal RNA small subunit methyltransferase A from Erythrobacter litoralis (strain HTCC2594).